Reading from the N-terminus, the 454-residue chain is Nucleoprotein (454 aa).

The tract at residues 1 to 62 (MSFVPGQENA…ATTQPNTGSV (62 aa)) is disordered. Residues 9 to 23 (NAGSRSSSGNRAGNG) show a composition bias toward low complexity. Residues 49 to 61 (PKQTATTQPNTGS) are compositionally biased toward polar residues. Residues 56–197 (QPNTGSVVPH…GFYVEGSGRS (142 aa)) form an RNA-binding region. The region spanning 64 to 193 (PHYSWFSGIT…VLPQGFYVEG (130 aa)) is the CoV N NTD domain. The RNA site is built by R109, R125, and R167. Position 170 is a phosphoserine; by host (S170). At T177 the chain carries Phosphothreonine; by host. 3 disordered regions span residues 186-230 (PQGF…STVK), 271-290 (PRQK…FGKR), and 383-428 (AGGA…SREL). A compositionally biased stretch (low complexity) spans 193-212 (GSGRSAPASRSGSRSQSRGP). Phosphoserine; by host is present on S194. A compositionally biased stretch (polar residues) spans 215-227 (RARSSSNQRQPAS). Residues 260-383 (AKEVRQKILN…ENLNAYQNQA (124 aa)) form the CoV N CTD domain. The segment at 267–384 (ILNKPRQKRT…NLNAYQNQAG (118 aa)) is dimerization. Phosphoserine; by host is present on residues S390 and S425. T429 bears the Phosphothreonine; by host mark.

This sequence belongs to the betacoronavirus nucleocapsid protein family. Homooligomer. Both monomeric and oligomeric forms interact with RNA. Interacts with protein M. Interacts with NSP3; this interaction serves to tether the genome to the newly translated replicase-transcriptase complex at a very early stage of infection. ADP-ribosylated. The ADP-ribosylation is retained in the virion during infection. Post-translationally, phosphorylated on serine and threonine residues.

The protein resides in the virion. The protein localises to the host endoplasmic reticulum-Golgi intermediate compartment. It is found in the host Golgi apparatus. Packages the positive strand viral genome RNA into a helical ribonucleocapsid (RNP) and plays a fundamental role during virion assembly through its interactions with the viral genome and membrane protein M. Plays an important role in enhancing the efficiency of subgenomic viral RNA transcription as well as viral replication. This chain is Nucleoprotein, found in Rattus norvegicus (Rat).